Consider the following 100-residue polypeptide: MARKSLIQRERKRQKLEQKYHLIRRSLKKEISKTPSLSDKWKIHGKLQSPPRNSAPIRLHRRCFSTGRPRANYRDFGLSGHVLREMVHACLLPGATRSSW.

This sequence belongs to the universal ribosomal protein uS14 family. In terms of assembly, part of the 30S ribosomal subunit.

The protein resides in the plastid. Its subcellular location is the chloroplast. Its function is as follows. Binds 16S rRNA, required for the assembly of 30S particles. The protein is Small ribosomal subunit protein uS14c of Amborella trichopoda.